The primary structure comprises 382 residues: 3-dehydroquinate synthase (382 aa).

Residues 81–86, 115–119, 139–140, Lys152, and Lys161 contribute to the NAD(+) site; these read EGEISK, GVVGD, and TS. Residues Glu194, His256, and His274 each contribute to the Zn(2+) site.

It belongs to the sugar phosphate cyclases superfamily. Dehydroquinate synthase family. NAD(+) serves as cofactor. Co(2+) is required as a cofactor. The cofactor is Zn(2+).

The protein localises to the cytoplasm. The catalysed reaction is 7-phospho-2-dehydro-3-deoxy-D-arabino-heptonate = 3-dehydroquinate + phosphate. The protein operates within metabolic intermediate biosynthesis; chorismate biosynthesis; chorismate from D-erythrose 4-phosphate and phosphoenolpyruvate: step 2/7. Catalyzes the conversion of 3-deoxy-D-arabino-heptulosonate 7-phosphate (DAHP) to dehydroquinate (DHQ). This chain is 3-dehydroquinate synthase, found in Bradyrhizobium diazoefficiens (strain JCM 10833 / BCRC 13528 / IAM 13628 / NBRC 14792 / USDA 110).